We begin with the raw amino-acid sequence, 280 residues long: uncharacterized protein (280 aa).

Residues 1–51 constitute a chloroplast transit peptide; sequence MATSLLLRHSSAVFFSQSSFFTKNKSFRSFTSIKMEKGEAENAVKTKKVFV.

Belongs to the NAD(P)-dependent epimerase/dehydratase family.

It localises to the plastid. Its subcellular location is the chloroplast. It is found in the plastoglobule. This is an uncharacterized protein from Arabidopsis thaliana (Mouse-ear cress).